We begin with the raw amino-acid sequence, 89 residues long: Small ribosomal subunit protein uS15 (89 aa).

The protein belongs to the universal ribosomal protein uS15 family. As to quaternary structure, part of the 30S ribosomal subunit. Forms a bridge to the 50S subunit in the 70S ribosome, contacting the 23S rRNA.

Functionally, one of the primary rRNA binding proteins, it binds directly to 16S rRNA where it helps nucleate assembly of the platform of the 30S subunit by binding and bridging several RNA helices of the 16S rRNA. Its function is as follows. Forms an intersubunit bridge (bridge B4) with the 23S rRNA of the 50S subunit in the ribosome. The polypeptide is Small ribosomal subunit protein uS15 (Nitratidesulfovibrio vulgaris (strain DSM 19637 / Miyazaki F) (Desulfovibrio vulgaris)).